Here is a 303-residue protein sequence, read N- to C-terminus: Growth/differentiation factor 15 (303 aa).

An N-terminal signal peptide occupies residues 1–30; it reads MAPPALQAQPPGGSQLRFLLFLLLLLLLLS. The propeptide occupies 31 to 188; sequence WPSQGDALAM…LRVAAGRGRR (158 aa). Asn-71 carries N-linked (GlcNAc...) asparagine glycosylation. 4 disulfide bridges follow: Cys-198–Cys-205, Cys-206–Cys-269, Cys-235–Cys-300, and Cys-239–Cys-302.

This sequence belongs to the TGF-beta family. As to quaternary structure, homodimer; disulfide-linked. Interacts with GFRAL and RET; ligand of GFRAL, which mediates GDF15 internalization and cellular signaling through interaction with RET via the formation of a 2:2:2 ternary complex composed of GDF15, GFRAL and RET. Detected in plasma (at protein level). Highly expressed in liver. Expressed in the distal small intestine, colon and kidney. Expressed in skeletal muscle in response to mitochondrial stress. Expressed by cardiomyocytes, expression is highly increased in heart diseases. Also detected in subcutaneous fat.

It localises to the secreted. Hormone produced in response to various stresses to confer information about those stresses to the brain, and trigger an aversive response, characterized by nausea and/or loss of appetite. The aversive response is both required to reduce continuing exposure to those stresses at the time of exposure and to promote avoidance behavior in the future. Acts by binding to its receptor, GFRAL, activating GFRAL-expressing neurons localized in the area postrema and nucleus tractus solitarius of the brainstem. It then triggers the activation of neurons localized within the parabrachial nucleus and central amygdala, which constitutes part of the 'emergency circuit' that shapes responses to stressful conditions. The GDF15-GFRAL signal induces expression of genes involved in metabolism, such as lipid metabolism in adipose tissues. Required for avoidance behavior in response to food allergens: induced downstream of mast cell activation to promote aversion and minimize harmful effects of exposure to noxious substances. In addition to suppress appetite, also promotes weight loss by enhancing energy expenditure in muscle: acts by increasing calcium futile cycling in muscle. Contributes to the effect of metformin, an anti-diabetic drug, on appetite reduction and weight loss: produced in the kidney in response to metformin treatment, thereby activating the GDF15-GFRAL response, leading to reduced appetite and weight. Produced in response to anticancer drugs, such as camptothecin or cisplatin, promoting nausea and contributing to malnutrition. Overproduced in many cancers, promoting anorexia in cancer (cachexia). Responsible for the risk of nausea during pregnancy: high levels of GDF15 during pregnancy, mostly originating from embryos, are associated with increased nausea. Maternal sensitivity to nausea is probably determined by pre-pregnancy exposure to GDF15, females with naturally high level of GDF15 being less susceptible to nausea than female mice with low levels of GDF15 before pregnancy. Promotes metabolic adaptation in response to systemic inflammation caused by bacterial and viral infections in order to promote tissue tolerance and prevent tissue damage. Required for tissue tolerance in response to myocardial infarction by acting as an inhibitor of leukocyte integring activation, thereby protecting against cardiac rupture. Inhibits growth hormone signaling on hepatocytes. The protein is Growth/differentiation factor 15 of Mus musculus (Mouse).